Here is a 227-residue protein sequence, read N- to C-terminus: Ubiquitin domain-containing protein 1 (227 aa).

The interval 1 to 35 is disordered; that stretch reads MGNCVGRQRRERPAAPGHPRKRAGRNEPLKKERLK. Residues 24-35 show a composition bias toward basic and acidic residues; it reads GRNEPLKKERLK. The Ubiquitin-like domain occupies 149-224; the sequence is FPLKVRLSTG…IQVIINQPPP (76 aa).

Interacts with UBTD1.

In terms of biological role, may be involved in the regulation of cellular senescence through a positive feedback loop with TP53. Is a TP53 downstream target gene that increases the stability of TP53 protein by promoting the ubiquitination and degradation of MDM2. The polypeptide is Ubiquitin domain-containing protein 1 (Ubtd1) (Rattus norvegicus (Rat)).